The sequence spans 226 residues: ATP-dependent dethiobiotin synthetase BioD (226 aa).

12–17 (DAGKTV) is a binding site for ATP. Mg(2+) is bound at residue Thr-16. Residue Lys-39 is part of the active site. Ser-43 serves as a coordination point for substrate. Residues Asp-47, 108–111 (EGVG), 168–169 (NC), 200–202 (PYL), and Asn-207 each bind ATP. Positions 47 and 108 each coordinate Mg(2+).

It belongs to the dethiobiotin synthetase family. In terms of assembly, homodimer. Requires Mg(2+) as cofactor.

It localises to the cytoplasm. The catalysed reaction is (7R,8S)-7,8-diammoniononanoate + CO2 + ATP = (4R,5S)-dethiobiotin + ADP + phosphate + 3 H(+). It carries out the reaction (7R,8S)-8-amino-7-(carboxyamino)nonanoate + ATP = (4R,5S)-dethiobiotin + ADP + phosphate + H(+). Its pathway is cofactor biosynthesis; biotin biosynthesis; biotin from 7,8-diaminononanoate: step 1/2. Catalyzes a mechanistically unusual reaction, the ATP-dependent insertion of CO2 between the N7 and N8 nitrogen atoms of 7,8-diaminopelargonic acid (DAPA, also called 7,8-diammoniononanoate) to form a ureido ring. This cyanobacterium does not encode bioA (which catalyzes the formation of the precursor for this reaction in the cannonical pathway), instead it encodes bioU, which replaces bioA and also performs the first half of the cannonical BioD reaction. Thus in this organism BioD has a different substrate. In Cyanothece sp. (strain PCC 7425 / ATCC 29141), this protein is ATP-dependent dethiobiotin synthetase BioD.